The primary structure comprises 473 residues: Fumarate hydratase class II (473 aa).

Substrate-binding positions include 105-107 (SGT), 130-133 (HPND), 140-142 (SSN), and threonine 188. The Proton donor/acceptor role is filled by histidine 189. Residue serine 319 is part of the active site. Residues serine 320 and 325–327 (KVN) contribute to the substrate site.

Belongs to the class-II fumarase/aspartase family. Fumarase subfamily. Homotetramer.

The protein localises to the cytoplasm. It carries out the reaction (S)-malate = fumarate + H2O. It functions in the pathway carbohydrate metabolism; tricarboxylic acid cycle; (S)-malate from fumarate: step 1/1. Its function is as follows. Involved in the TCA cycle. Catalyzes the stereospecific interconversion of fumarate to L-malate. The polypeptide is Fumarate hydratase class II (Xylella fastidiosa (strain 9a5c)).